We begin with the raw amino-acid sequence, 198 residues long: Glycerol-3-phosphate acyltransferase (198 aa).

A run of 5 helical transmembrane segments spans residues 6 to 26, 56 to 78, 83 to 101, 113 to 133, and 155 to 175; these read FLPVALVIGYLLGSIPFGLVL, LAAGTLLLDALKGTVAVVIAGYI, AAMAAGLGAFLGHLFPVWL, IGILLGLFWPAAVVFCLLWLA, and FLWWFGHLALSALFAVLTLLL.

Belongs to the PlsY family. As to quaternary structure, probably interacts with PlsX.

The protein localises to the cell inner membrane. The catalysed reaction is an acyl phosphate + sn-glycerol 3-phosphate = a 1-acyl-sn-glycero-3-phosphate + phosphate. It participates in lipid metabolism; phospholipid metabolism. Catalyzes the transfer of an acyl group from acyl-phosphate (acyl-PO(4)) to glycerol-3-phosphate (G3P) to form lysophosphatidic acid (LPA). This enzyme utilizes acyl-phosphate as fatty acyl donor, but not acyl-CoA or acyl-ACP. The chain is Glycerol-3-phosphate acyltransferase from Bradyrhizobium diazoefficiens (strain JCM 10833 / BCRC 13528 / IAM 13628 / NBRC 14792 / USDA 110).